The chain runs to 319 residues: tRNA (guanine-N(7)-)-methyltransferase (319 aa).

The disordered stretch occupies residues 1-44 (MSESPETPEPSPAQSPEAAPEQPQAARPVTPGSQASFGTYGGRP). A compositionally biased stretch (low complexity) spans 14–26 (QSPEAAPEQPQAA). 4 residues coordinate S-adenosyl-L-methionine: Glu-103, Glu-128, Asn-155, and Asp-178. Asp-178 is an active-site residue. Residues Lys-182 and Asp-214 each contribute to the substrate site. The tract at residues 262 to 288 (APVKEGRAPVSTEHTGPNEGVDETGGW) is disordered. 298–301 (TSFE) contributes to the substrate binding site.

This sequence belongs to the class I-like SAM-binding methyltransferase superfamily. TrmB family.

It catalyses the reaction guanosine(46) in tRNA + S-adenosyl-L-methionine = N(7)-methylguanosine(46) in tRNA + S-adenosyl-L-homocysteine. It functions in the pathway tRNA modification; N(7)-methylguanine-tRNA biosynthesis. In terms of biological role, catalyzes the formation of N(7)-methylguanine at position 46 (m7G46) in tRNA. In Arthrobacter sp. (strain FB24), this protein is tRNA (guanine-N(7)-)-methyltransferase.